The sequence spans 201 residues: UPF0301 protein RHE_CH00966 (201 aa).

This sequence belongs to the UPF0301 (AlgH) family.

This chain is UPF0301 protein RHE_CH00966, found in Rhizobium etli (strain ATCC 51251 / DSM 11541 / JCM 21823 / NBRC 15573 / CFN 42).